The primary structure comprises 330 residues: Phospho-N-acetylmuramoyl-pentapeptide-transferase (330 aa).

Transmembrane regions (helical) follow at residues 3–23 (SVVLGAAVAFFVTVTLGSSFI), 49–69 (TPTMGGVLMLMGLVAGLAVVA), 71–91 (PNPATFSVLLIVAATAGVGLY), 111–131 (FLLLSLVVVLADVMALRYVGV), 145–165 (VLGPGVVGVGLFSVLMLFVIV), 179–199 (GLAAGAGGIALLTYTAIAFLE), 204–224 (LAIICGAMVGAIIGFLWYNSH), 228–248 (IFMGDTGSLAIGGVLSAAAIL), 256–276 (PVIGGLFVIVALSVMIQVVVF), and 307–327 (FWIVQSAFSALGFLMYYFFLY).

Belongs to the glycosyltransferase 4 family. MraY subfamily. Mg(2+) serves as cofactor.

It localises to the cell membrane. It catalyses the reaction UDP-N-acetyl-alpha-D-muramoyl-L-alanyl-gamma-D-glutamyl-meso-2,6-diaminopimeloyl-D-alanyl-D-alanine + di-trans,octa-cis-undecaprenyl phosphate = di-trans,octa-cis-undecaprenyl diphospho-N-acetyl-alpha-D-muramoyl-L-alanyl-D-glutamyl-meso-2,6-diaminopimeloyl-D-alanyl-D-alanine + UMP. Its pathway is cell wall biogenesis; peptidoglycan biosynthesis. In terms of biological role, catalyzes the initial step of the lipid cycle reactions in the biosynthesis of the cell wall peptidoglycan: transfers peptidoglycan precursor phospho-MurNAc-pentapeptide from UDP-MurNAc-pentapeptide onto the lipid carrier undecaprenyl phosphate, yielding undecaprenyl-pyrophosphoryl-MurNAc-pentapeptide, known as lipid I. The sequence is that of Phospho-N-acetylmuramoyl-pentapeptide-transferase from Rubrobacter xylanophilus (strain DSM 9941 / JCM 11954 / NBRC 16129 / PRD-1).